Consider the following 195-residue polypeptide: Imidazoleglycerol-phosphate dehydratase (195 aa).

This sequence belongs to the imidazoleglycerol-phosphate dehydratase family.

Its subcellular location is the cytoplasm. The enzyme catalyses D-erythro-1-(imidazol-4-yl)glycerol 3-phosphate = 3-(imidazol-4-yl)-2-oxopropyl phosphate + H2O. It functions in the pathway amino-acid biosynthesis; L-histidine biosynthesis; L-histidine from 5-phospho-alpha-D-ribose 1-diphosphate: step 6/9. This is Imidazoleglycerol-phosphate dehydratase from Cupriavidus pinatubonensis (strain JMP 134 / LMG 1197) (Cupriavidus necator (strain JMP 134)).